Consider the following 168-residue polypeptide: Xanthine-guanine phosphoribosyltransferase (168 aa).

Residues 43 to 44 (RG) and 102 to 110 (DDLVDTGAT) contribute to the 5-phospho-alpha-D-ribose 1-diphosphate site. Position 103 (aspartate 103) interacts with Mg(2+). Guanine contacts are provided by aspartate 106 and isoleucine 149. 2 residues coordinate xanthine: aspartate 106 and isoleucine 149. Residues 106–110 (DTGAT) and 148–149 (WI) contribute to the GMP site.

It belongs to the purine/pyrimidine phosphoribosyltransferase family. XGPT subfamily. As to quaternary structure, homotetramer. The cofactor is Mg(2+).

Its subcellular location is the cell inner membrane. It catalyses the reaction GMP + diphosphate = guanine + 5-phospho-alpha-D-ribose 1-diphosphate. The catalysed reaction is XMP + diphosphate = xanthine + 5-phospho-alpha-D-ribose 1-diphosphate. The enzyme catalyses IMP + diphosphate = hypoxanthine + 5-phospho-alpha-D-ribose 1-diphosphate. It participates in purine metabolism; GMP biosynthesis via salvage pathway; GMP from guanine: step 1/1. Its pathway is purine metabolism; XMP biosynthesis via salvage pathway; XMP from xanthine: step 1/1. Its function is as follows. Purine salvage pathway enzyme that catalyzes the transfer of the ribosyl-5-phosphate group from 5-phospho-alpha-D-ribose 1-diphosphate (PRPP) to the N9 position of the 6-oxopurines guanine and xanthine to form the corresponding ribonucleotides GMP (guanosine 5'-monophosphate) and XMP (xanthosine 5'-monophosphate), with the release of PPi. To a lesser extent, also acts on hypoxanthine. The chain is Xanthine-guanine phosphoribosyltransferase from Nitrobacter hamburgensis (strain DSM 10229 / NCIMB 13809 / X14).